Reading from the N-terminus, the 60-residue chain is Large ribosomal subunit protein bL32 (60 aa).

The protein belongs to the bacterial ribosomal protein bL32 family.

This is Large ribosomal subunit protein bL32 from Hydrogenobaculum sp. (strain Y04AAS1).